The chain runs to 119 residues: Large ribosomal subunit protein bL20 (119 aa).

Belongs to the bacterial ribosomal protein bL20 family.

In terms of biological role, binds directly to 23S ribosomal RNA and is necessary for the in vitro assembly process of the 50S ribosomal subunit. It is not involved in the protein synthesizing functions of that subunit. The sequence is that of Large ribosomal subunit protein bL20 from Rhodopseudomonas palustris (strain BisB18).